A 206-amino-acid chain; its full sequence is Large ribosomal subunit protein uL4 (206 aa).

The tract at residues 43–78 (ARSGNRKQKDREEVKHTTKKPWRQKGTGRARAGMSS) is disordered. Over residues 49 to 58 (KQKDREEVKH) the composition is skewed to basic and acidic residues. A compositionally biased stretch (basic residues) spans 59–70 (TTKKPWRQKGTG).

The protein belongs to the universal ribosomal protein uL4 family. Part of the 50S ribosomal subunit.

Its function is as follows. One of the primary rRNA binding proteins, this protein initially binds near the 5'-end of the 23S rRNA. It is important during the early stages of 50S assembly. It makes multiple contacts with different domains of the 23S rRNA in the assembled 50S subunit and ribosome. In terms of biological role, forms part of the polypeptide exit tunnel. The sequence is that of Large ribosomal subunit protein uL4 from Cupriavidus metallidurans (strain ATCC 43123 / DSM 2839 / NBRC 102507 / CH34) (Ralstonia metallidurans).